Reading from the N-terminus, the 384-residue chain is 8-amino-7-oxononanoate synthase (384 aa).

Position 21 (R21) interacts with substrate. 108–109 is a pyridoxal 5'-phosphate binding site; sequence GY. Position 133 (H133) interacts with substrate. Pyridoxal 5'-phosphate is bound by residues S179, H207, and T233. The residue at position 236 (K236) is an N6-(pyridoxal phosphate)lysine. T350 provides a ligand contact to substrate.

The protein belongs to the class-II pyridoxal-phosphate-dependent aminotransferase family. BioF subfamily. As to quaternary structure, homodimer. Pyridoxal 5'-phosphate is required as a cofactor.

It catalyses the reaction 6-carboxyhexanoyl-[ACP] + L-alanine + H(+) = (8S)-8-amino-7-oxononanoate + holo-[ACP] + CO2. It functions in the pathway cofactor biosynthesis; biotin biosynthesis. Functionally, catalyzes the decarboxylative condensation of pimeloyl-[acyl-carrier protein] and L-alanine to produce 8-amino-7-oxononanoate (AON), [acyl-carrier protein], and carbon dioxide. This Buchnera aphidicola subsp. Baizongia pistaciae (strain Bp) protein is 8-amino-7-oxononanoate synthase.